A 609-amino-acid polypeptide reads, in one-letter code: UvrABC system protein C (609 aa).

A GIY-YIG domain is found at 16–94 (SSAGVYRMYD…IKQYMPKYNV (79 aa)). A UVR domain is found at 203 to 238 (QQVISALVDKMELAAERQAYEQAARFRDQIMALRKV).

This sequence belongs to the UvrC family. In terms of assembly, interacts with UvrB in an incision complex.

The protein localises to the cytoplasm. In terms of biological role, the UvrABC repair system catalyzes the recognition and processing of DNA lesions. UvrC both incises the 5' and 3' sides of the lesion. The N-terminal half is responsible for the 3' incision and the C-terminal half is responsible for the 5' incision. The chain is UvrABC system protein C from Shewanella baltica (strain OS195).